The primary structure comprises 253 residues: 5'/3'-nucleotidase SurE (253 aa).

Residues Asp-8, Asp-9, Ser-39, and Asn-92 each contribute to the a divalent metal cation site.

It belongs to the SurE nucleotidase family. Requires a divalent metal cation as cofactor.

The protein localises to the cytoplasm. The enzyme catalyses a ribonucleoside 5'-phosphate + H2O = a ribonucleoside + phosphate. It catalyses the reaction a ribonucleoside 3'-phosphate + H2O = a ribonucleoside + phosphate. The catalysed reaction is [phosphate](n) + H2O = [phosphate](n-1) + phosphate + H(+). Functionally, nucleotidase with a broad substrate specificity as it can dephosphorylate various ribo- and deoxyribonucleoside 5'-monophosphates and ribonucleoside 3'-monophosphates with highest affinity to 3'-AMP. Also hydrolyzes polyphosphate (exopolyphosphatase activity) with the preference for short-chain-length substrates (P20-25). Might be involved in the regulation of dNTP and NTP pools, and in the turnover of 3'-mononucleotides produced by numerous intracellular RNases (T1, T2, and F) during the degradation of various RNAs. This is 5'/3'-nucleotidase SurE from Erwinia tasmaniensis (strain DSM 17950 / CFBP 7177 / CIP 109463 / NCPPB 4357 / Et1/99).